Here is a 305-residue protein sequence, read N- to C-terminus: Oxygen-dependent coproporphyrinogen-III oxidase (305 aa).

Residue S92 coordinates substrate. The a divalent metal cation site is built by H96 and H106. H106 functions as the Proton donor in the catalytic mechanism. 108-110 (NVR) serves as a coordination point for substrate. H145 and H175 together coordinate a divalent metal cation. Residues 239-274 (YVEFNLLFDRGTLFGLQSGGRAESILISLPPLVRWE) form an important for dimerization region. Position 257 to 259 (257 to 259 (GGR)) interacts with substrate.

It belongs to the aerobic coproporphyrinogen-III oxidase family. As to quaternary structure, homodimer. A divalent metal cation serves as cofactor.

It is found in the cytoplasm. The enzyme catalyses coproporphyrinogen III + O2 + 2 H(+) = protoporphyrinogen IX + 2 CO2 + 2 H2O. Its pathway is porphyrin-containing compound metabolism; protoporphyrin-IX biosynthesis; protoporphyrinogen-IX from coproporphyrinogen-III (O2 route): step 1/1. Its function is as follows. Involved in the heme biosynthesis. Catalyzes the aerobic oxidative decarboxylation of propionate groups of rings A and B of coproporphyrinogen-III to yield the vinyl groups in protoporphyrinogen-IX. This Xylella fastidiosa (strain 9a5c) protein is Oxygen-dependent coproporphyrinogen-III oxidase.